Consider the following 545-residue polypeptide: Glucose-6-phosphate isomerase (545 aa).

The active-site Proton donor is E345. Active-site residues include H376 and K514.

It belongs to the GPI family.

Its subcellular location is the cytoplasm. The catalysed reaction is alpha-D-glucose 6-phosphate = beta-D-fructose 6-phosphate. It participates in carbohydrate biosynthesis; gluconeogenesis. It functions in the pathway carbohydrate degradation; glycolysis; D-glyceraldehyde 3-phosphate and glycerone phosphate from D-glucose: step 2/4. In terms of biological role, catalyzes the reversible isomerization of glucose-6-phosphate to fructose-6-phosphate. The chain is Glucose-6-phosphate isomerase from Leptothrix cholodnii (strain ATCC 51168 / LMG 8142 / SP-6) (Leptothrix discophora (strain SP-6)).